Here is a 586-residue protein sequence, read N- to C-terminus: Phosphomethylpyrimidine synthase (586 aa).

A disordered region spans residues 1–59 (MKQSVSAEQIELKSSLPGSKKVYVDGPREGMKVPMREIEQSDTNGVPNPPIRVYDTSGP). Basic and acidic residues predominate over residues 22 to 39 (VYVDGPREGMKVPMREIE). Substrate contacts are provided by residues asparagine 193, methionine 222, tyrosine 251, histidine 287, 307-309 (SRG), 348-351 (DGLR), and glutamate 387. Histidine 391 lines the Zn(2+) pocket. Substrate is bound at residue tyrosine 414. Histidine 455 lines the Zn(2+) pocket. Residues cysteine 535, cysteine 538, and cysteine 543 each coordinate [4Fe-4S] cluster.

It belongs to the ThiC family. [4Fe-4S] cluster serves as cofactor.

It catalyses the reaction 5-amino-1-(5-phospho-beta-D-ribosyl)imidazole + S-adenosyl-L-methionine = 4-amino-2-methyl-5-(phosphooxymethyl)pyrimidine + CO + 5'-deoxyadenosine + formate + L-methionine + 3 H(+). It participates in cofactor biosynthesis; thiamine diphosphate biosynthesis. In terms of biological role, catalyzes the synthesis of the hydroxymethylpyrimidine phosphate (HMP-P) moiety of thiamine from aminoimidazole ribotide (AIR) in a radical S-adenosyl-L-methionine (SAM)-dependent reaction. The protein is Phosphomethylpyrimidine synthase of Bacillus cereus (strain ATCC 10987 / NRS 248).